The primary structure comprises 261 residues: Thiamine thiazole synthase (261 aa).

Residues serine 40, 59–60 (ER), glycine 67, valine 133, and 159–161 (HID) contribute to the NAD(+) site. Fe cation contacts are provided by aspartate 161 and histidine 176. NAD(+)-binding residues include serine 179 and methionine 226. Arginine 236 lines the glycine pocket.

Belongs to the THI4 family. As to quaternary structure, homooctamer; tetramer of dimers. Fe(2+) is required as a cofactor.

It carries out the reaction hydrogen sulfide + glycine + NAD(+) = ADP-5-ethyl-4-methylthiazole-2-carboxylate + nicotinamide + 3 H2O + H(+). Its pathway is cofactor biosynthesis; thiamine diphosphate biosynthesis. Functionally, involved in the biosynthesis of the thiazole moiety of thiamine. Catalyzes the conversion of NAD and glycine to adenosine diphosphate 5-(2-hydroxyethyl)-4-methylthiazole-2-carboxylate (ADT), an adenylated thiazole intermediate, using free sulfide as a source of sulfur. This is Thiamine thiazole synthase from Methanococcus maripaludis (strain C6 / ATCC BAA-1332).